The following is a 618-amino-acid chain: MILQNKTFDLNPNDIAGLELVCQTLRNRILEVVSANGGHLSSSLGAVELIVGMHALFDCQKNPFIFDTSHQAYAHKLLTGRFESFSTLRQFKGLSGFTKPSESAYDYFIAGHSSTSVSIGVGVAKAFCLKQALGMPIALLGDGSISAGIFYEALNELGDRKYPMIMILNDNEMSISTPIGALSKALSQLMKGPFYQSFRSKVKKILSTLPESVNYLASRFEESFKLITPGVFFEELGINYIGPINGHDLSAIIETLKLAKELKEPVLIHAQTLKGKGYKIAEGRYEKWHGVGPFDLDTGLSKKSKSAILSPTEAYSNTLLELAKKDEKIVGVTAAMPSGTGLDKLIDAYPLRFFDVAIAEQHALTSSSAMAKEGFKPFVSIYSTFLQRAYDSIVHDACISSLPIKLAIDRAGIVGEDGETHQGLLDVSYLRSIPNMVIFAPRDNETLKNAVRFANEHDSSPCAFRYPRGSFALKEGVFEPSGFVLGQSELLKKEGEILLIGYGNGVGRAHLVQLALKEKNIECALLDLRFLKPLDPNLSAIVAPYQKLYVFSDNYKLGGVASAILEFLSEQNILKPVKSFEIIDEFIMHGNTALVEKSLGLDTESLTDAILKDLGQER.

Residues His70 and 111–113 each bind thiamine diphosphate; that span reads GHS. Asp142 provides a ligand contact to Mg(2+). Thiamine diphosphate-binding positions include 143–144, Asn171, Tyr278, and Glu360; that span reads GS. Asn171 contacts Mg(2+).

Belongs to the transketolase family. DXPS subfamily. As to quaternary structure, homodimer. The cofactor is Mg(2+). Thiamine diphosphate is required as a cofactor.

The enzyme catalyses D-glyceraldehyde 3-phosphate + pyruvate + H(+) = 1-deoxy-D-xylulose 5-phosphate + CO2. The protein operates within metabolic intermediate biosynthesis; 1-deoxy-D-xylulose 5-phosphate biosynthesis; 1-deoxy-D-xylulose 5-phosphate from D-glyceraldehyde 3-phosphate and pyruvate: step 1/1. In terms of biological role, catalyzes the acyloin condensation reaction between C atoms 2 and 3 of pyruvate and glyceraldehyde 3-phosphate to yield 1-deoxy-D-xylulose-5-phosphate (DXP). This is 1-deoxy-D-xylulose-5-phosphate synthase from Helicobacter pylori (strain ATCC 700392 / 26695) (Campylobacter pylori).